Reading from the N-terminus, the 185-residue chain is MISAGDLRKGTTFEQDGQVYTVVDFLHVKPGKGAAFVRTKLRNVITGSVTDTTFNPSAKLQEAVIERKEMQYLYSDGELYYFMDQETFEQIPLEYAKVQEAIKFLKENMFAIIKFYKGEAFSVEAPNFVELQVTHTEPGVKGNTATNVLKPATLETGAVVSVPIFVNQGETIRVDTRSGEYMERV.

Belongs to the elongation factor P family.

Its subcellular location is the cytoplasm. It participates in protein biosynthesis; polypeptide chain elongation. Functionally, involved in peptide bond synthesis. Stimulates efficient translation and peptide-bond synthesis on native or reconstituted 70S ribosomes in vitro. Probably functions indirectly by altering the affinity of the ribosome for aminoacyl-tRNA, thus increasing their reactivity as acceptors for peptidyl transferase. In Clostridium kluyveri (strain ATCC 8527 / DSM 555 / NBRC 12016 / NCIMB 10680 / K1), this protein is Elongation factor P.